Reading from the N-terminus, the 185-residue chain is Large ribosomal subunit protein uL5 (185 aa).

Belongs to the universal ribosomal protein uL5 family. In terms of assembly, part of the 50S ribosomal subunit; part of the 5S rRNA/L5/L18/L25 subcomplex. Contacts the 5S rRNA and the P site tRNA. Forms a bridge to the 30S subunit in the 70S ribosome.

Its function is as follows. This is one of the proteins that bind and probably mediate the attachment of the 5S RNA into the large ribosomal subunit, where it forms part of the central protuberance. In the 70S ribosome it contacts protein S13 of the 30S subunit (bridge B1b), connecting the 2 subunits; this bridge is implicated in subunit movement. Contacts the P site tRNA; the 5S rRNA and some of its associated proteins might help stabilize positioning of ribosome-bound tRNAs. This chain is Large ribosomal subunit protein uL5, found in Caulobacter vibrioides (strain NA1000 / CB15N) (Caulobacter crescentus).